We begin with the raw amino-acid sequence, 113 residues long: Protein translation factor SUI1 homolog 2 (113 aa).

Ser-2 carries the post-translational modification N-acetylserine.

This sequence belongs to the SUI1 family.

Its function is as follows. Probably involved in translation. The protein is Protein translation factor SUI1 homolog 2 of Arabidopsis thaliana (Mouse-ear cress).